Here is a 146-residue protein sequence, read N- to C-terminus: uncharacterized protein (146 aa).

In terms of domain architecture, N-acetyltransferase spans 1 to 120 (MTDKFDANDE…TILKWEKNMD (120 aa)).

The protein belongs to the acetyltransferase family.

This is an uncharacterized protein from Streptococcus pyogenes serotype M6 (strain ATCC BAA-946 / MGAS10394).